Consider the following 643-residue polypeptide: tRNA 5-methylaminomethyl-2-thiouridine biosynthesis bifunctional protein MnmC (643 aa).

Positions 1-223 (MPDRLVSATL…VDDRLVGDYA (223 aa)) are tRNA (mnm(5)s(2)U34)-methyltransferase. Residues 247–643 (IGAGLAGCAV…LRARRVGSAG (397 aa)) are FAD-dependent cmnm(5)s(2)U34 oxidoreductase.

The protein in the N-terminal section; belongs to the methyltransferase superfamily. tRNA (mnm(5)s(2)U34)-methyltransferase family. It in the C-terminal section; belongs to the DAO family. FAD serves as cofactor.

The protein localises to the cytoplasm. It carries out the reaction 5-aminomethyl-2-thiouridine(34) in tRNA + S-adenosyl-L-methionine = 5-methylaminomethyl-2-thiouridine(34) in tRNA + S-adenosyl-L-homocysteine + H(+). Its function is as follows. Catalyzes the last two steps in the biosynthesis of 5-methylaminomethyl-2-thiouridine (mnm(5)s(2)U) at the wobble position (U34) in tRNA. Catalyzes the FAD-dependent demodification of cmnm(5)s(2)U34 to nm(5)s(2)U34, followed by the transfer of a methyl group from S-adenosyl-L-methionine to nm(5)s(2)U34, to form mnm(5)s(2)U34. This chain is tRNA 5-methylaminomethyl-2-thiouridine biosynthesis bifunctional protein MnmC, found in Burkholderia orbicola (strain MC0-3).